A 503-amino-acid chain; its full sequence is ATP-dependent RNA helicase dbp3 (503 aa).

The span at 1–13 shows a compositional bias: basic and acidic residues; it reads MGKRVSHNEGADR. The interval 1–37 is disordered; sequence MGKRVSHNEGADRRPKKKAKNEKPEKETMESPAADVT. A Q motif motif is present at residues 104–112; it reads SFASPTPIQ. The region spanning 116–292 is the Helicase ATP-binding domain; it reads WPLLFAGRDV…ATFMTSAVTV (177 aa). Position 129 to 136 (129 to 136) interacts with ATP; sequence AETGSGKT. The short motif at 239-242 is the DEAD box element; that stretch reads DEAD. A Helicase C-terminal domain is found at 323–472; the sequence is RLVQLLSENQ…EVPQELLKFG (150 aa).

This sequence belongs to the DEAD box helicase family. DDX5/DBP2 subfamily.

Its subcellular location is the nucleus. It localises to the nucleolus. It carries out the reaction ATP + H2O = ADP + phosphate + H(+). ATP-dependent RNA helicase required for 60S ribosomal subunit synthesis. Involved in efficient pre-rRNA processing, predominantly at site A3, which is necessary for the normal formation of 25S and 5.8S rRNAs. This chain is ATP-dependent RNA helicase dbp3 (dbp3), found in Aspergillus clavatus (strain ATCC 1007 / CBS 513.65 / DSM 816 / NCTC 3887 / NRRL 1 / QM 1276 / 107).